The following is a 252-amino-acid chain: Imidazole glycerol phosphate synthase subunit HisF (252 aa).

Residues Asp12 and Asp131 contribute to the active site.

The protein belongs to the HisA/HisF family. Heterodimer of HisH and HisF.

It localises to the cytoplasm. The enzyme catalyses 5-[(5-phospho-1-deoxy-D-ribulos-1-ylimino)methylamino]-1-(5-phospho-beta-D-ribosyl)imidazole-4-carboxamide + L-glutamine = D-erythro-1-(imidazol-4-yl)glycerol 3-phosphate + 5-amino-1-(5-phospho-beta-D-ribosyl)imidazole-4-carboxamide + L-glutamate + H(+). It functions in the pathway amino-acid biosynthesis; L-histidine biosynthesis; L-histidine from 5-phospho-alpha-D-ribose 1-diphosphate: step 5/9. In terms of biological role, IGPS catalyzes the conversion of PRFAR and glutamine to IGP, AICAR and glutamate. The HisF subunit catalyzes the cyclization activity that produces IGP and AICAR from PRFAR using the ammonia provided by the HisH subunit. In Thermus thermophilus (strain ATCC 27634 / DSM 579 / HB8), this protein is Imidazole glycerol phosphate synthase subunit HisF.